The chain runs to 620 residues: Translocator protein BipB (620 aa).

The segment at 58 to 95 (QCDAQPAAHDARLDDKPALRAPQERDAPPLGASDTGSR) is disordered. Basic and acidic residues predominate over residues 66–84 (HDARLDDKPALRAPQERDA). The stretch at 309–339 (EMQAKREAELQKKSDEYQAQVKKAEEMQKTM) forms a coiled coil. 3 helical membrane passes run 355–375 (FAAAAFTGGASLALAAVGLAL), 401–421 (AILKPLMEMISSLITKALVAC), and 430–450 (LAGAILGAVVTGVALVAAAFV).

This sequence belongs to the SctE/SipB/YopB family.

The protein resides in the secreted. It is found in the host membrane. Its function is as follows. Plays a role in the bacterium-induced formation of multinucleated giant cell (MNGC), which is formed after host cell fusion, as well as in the intercellular spreading of bacteria and in the induction of apoptosis in macrophages. May act in concert with other effector proteins to induce fusion of host cell membranes. This Burkholderia pseudomallei (strain 1106a) protein is Translocator protein BipB (bipB).